Reading from the N-terminus, the 309-residue chain is MMSFLHIVFSILVVVAFILGNFANGFIALINFIAWVKRQKISSADQIIAALAVSRVGLLWVILLHWYSTVLNPTSSNLKVTIFISNAWAVTNHFSIWLAASLSIFYLLKIVNFSRLIFHHLKRKAKSVVLVIVLGSLFFLVCHLVMKSTYINVWTEEYEGNVTWKIKLRNAMHLSNLTVAMLANLIPFTLTLISFLLLIYSLCKHLKKMQLHGKGSQDPSTKIHIKALQTVTSFLILLAIYFLCLITSFWNSKMRPKEIVLMLCQAFGIIYPSFHSFILIWGNKTLKQTFLSVLWRVTCWAKGQNQSTP.

The Extracellular portion of the chain corresponds to 1–6; that stretch reads MMSFLH. The chain crosses the membrane as a helical span at residues 7-27; it reads IVFSILVVVAFILGNFANGFI. The Cytoplasmic segment spans residues 28–46; that stretch reads ALINFIAWVKRQKISSADQ. Residues 47–67 form a helical membrane-spanning segment; the sequence is IIAALAVSRVGLLWVILLHWY. Residues 68-79 lie on the Extracellular side of the membrane; that stretch reads STVLNPTSSNLK. The chain crosses the membrane as a helical span at residues 80-100; it reads VTIFISNAWAVTNHFSIWLAA. The Cytoplasmic portion of the chain corresponds to 101–125; it reads SLSIFYLLKIVNFSRLIFHHLKRKA. The chain crosses the membrane as a helical span at residues 126 to 146; that stretch reads KSVVLVIVLGSLFFLVCHLVM. Topologically, residues 147-178 are extracellular; that stretch reads KSTYINVWTEEYEGNVTWKIKLRNAMHLSNLT. Residues asparagine 161 and asparagine 176 are each glycosylated (N-linked (GlcNAc...) asparagine). A helical transmembrane segment spans residues 179–199; the sequence is VAMLANLIPFTLTLISFLLLI. The Cytoplasmic portion of the chain corresponds to 200 to 229; that stretch reads YSLCKHLKKMQLHGKGSQDPSTKIHIKALQ. The chain crosses the membrane as a helical span at residues 230 to 250; it reads TVTSFLILLAIYFLCLITSFW. Over 251 to 259 the chain is Extracellular; that stretch reads NSKMRPKEI. A helical transmembrane segment spans residues 260-280; the sequence is VLMLCQAFGIIYPSFHSFILI. The Cytoplasmic segment spans residues 281 to 309; the sequence is WGNKTLKQTFLSVLWRVTCWAKGQNQSTP.

The protein belongs to the G-protein coupled receptor T2R family.

The protein localises to the membrane. Its function is as follows. Receptor that may play a role in the perception of bitterness and is gustducin-linked. May play a role in sensing the chemical composition of the gastrointestinal content. The activity of this receptor may stimulate alpha gustducin, mediate PLC-beta-2 activation and lead to the gating of TRPM5. The sequence is that of Taste receptor type 2 member 20 (TAS2R20) from Gorilla gorilla gorilla (Western lowland gorilla).